A 433-amino-acid polypeptide reads, in one-letter code: Dihydroorotase (433 aa).

Residues histidine 63 and histidine 65 each contribute to the Zn(2+) site. Substrate-binding positions include histidine 65–arginine 67 and asparagine 97. Residues aspartate 155, histidine 182, and histidine 235 each coordinate Zn(2+). Asparagine 283 is a binding site for substrate. Aspartate 310 is a binding site for Zn(2+). Aspartate 310 is an active-site residue. Position 314 (histidine 314) interacts with substrate.

Belongs to the metallo-dependent hydrolases superfamily. DHOase family. Class I DHOase subfamily. Zn(2+) is required as a cofactor.

The catalysed reaction is (S)-dihydroorotate + H2O = N-carbamoyl-L-aspartate + H(+). The protein operates within pyrimidine metabolism; UMP biosynthesis via de novo pathway; (S)-dihydroorotate from bicarbonate: step 3/3. Its function is as follows. Catalyzes the reversible cyclization of carbamoyl aspartate to dihydroorotate. This Anaeromyxobacter dehalogenans (strain 2CP-1 / ATCC BAA-258) protein is Dihydroorotase.